Reading from the N-terminus, the 95-residue chain is Small ribosomal subunit protein uS19 (95 aa).

The protein belongs to the universal ribosomal protein uS19 family.

Protein S19 forms a complex with S13 that binds strongly to the 16S ribosomal RNA. The chain is Small ribosomal subunit protein uS19 from Thermodesulfovibrio yellowstonii (strain ATCC 51303 / DSM 11347 / YP87).